The chain runs to 436 residues: Tol-Pal system protein TolB (436 aa).

Positions 1-28 (MRSFLKPLLTIAAMALGMTAVIPMPAWA) are cleaved as a signal peptide.

Belongs to the TolB family. In terms of assembly, the Tol-Pal system is composed of five core proteins: the inner membrane proteins TolA, TolQ and TolR, the periplasmic protein TolB and the outer membrane protein Pal. They form a network linking the inner and outer membranes and the peptidoglycan layer.

The protein resides in the periplasm. Functionally, part of the Tol-Pal system, which plays a role in outer membrane invagination during cell division and is important for maintaining outer membrane integrity. The protein is Tol-Pal system protein TolB of Mesorhizobium japonicum (strain LMG 29417 / CECT 9101 / MAFF 303099) (Mesorhizobium loti (strain MAFF 303099)).